The following is a 396-amino-acid chain: L-lactate dehydrogenase (396 aa).

Residues 1–380 (MIISAASDYR…SRDSLVQELG (380 aa)) enclose the FMN hydroxy acid dehydrogenase domain. Tyr-24 lines the substrate pocket. FMN is bound by residues Ser-106 and Gln-127. Substrate is bound at residue Tyr-129. Thr-155 contacts FMN. Arg-164 is a substrate binding site. Lys-251 is an FMN binding site. Residue His-275 is the Proton acceptor of the active site. Arg-278 is a binding site for substrate. FMN is bound at residue 306–330 (DSGIRNGLDVVRMIALGADSVLLGR).

It belongs to the FMN-dependent alpha-hydroxy acid dehydrogenase family. It depends on FMN as a cofactor.

It is found in the cell inner membrane. The catalysed reaction is (S)-lactate + A = pyruvate + AH2. Catalyzes the conversion of L-lactate to pyruvate. Is coupled to the respiratory chain. In Citrobacter koseri (strain ATCC BAA-895 / CDC 4225-83 / SGSC4696), this protein is L-lactate dehydrogenase.